Reading from the N-terminus, the 569-residue chain is Peroxisomal targeting signal receptor (569 aa).

A Glycyl cysteine thioester (Cys-Gly) (interchain with G-Cter in ubiquitin) cross-link involves residue Cys-5. The amphipathic helix 1 (AH1) stretch occupies residues 6–28 (SVGANPLAQLNKRVQQDRTLQHG). A Glycyl lysine isopeptide (Lys-Gly) (interchain with G-Cter in ubiquitin) cross-link involves residue Lys-17. An amphipathic helix 2 (AH2) region spans residues 53–71 (KFQMEQFMAGKASSGGNMF). The short motif at 112–116 (WSQEF) is the WxxxF/Y motif 1 element. The segment at 150–154 (PMNMM) is amphipathic helix 3 (AH3). The WxxxF/Y motif 2 motif lies at 181–185 (WEQQF). The interval 229–245 (FQQIWNDIHDQTDDLDS) is amphipathic helix 4 (AH4). 5 TPR repeats span residues 281-315 (NTDA…DPGH), 316-349 (VDAW…DPHN), 417-450 (PDVQ…RPDD), 452-484 (CMWN…KPTF), and 486-518 (RARY…HEVE).

The protein belongs to the peroxisomal targeting signal receptor family. In terms of assembly, interacts (via WxxxF/Y and LVxEF motifs) with PEX14; promoting translocation through the PEX13-PEX14 docking complex. Monoubiquitinated at Cys-5 by PEX2 during PEX5 passage through the retrotranslocation channel: monoubiquitination acts as a signal for PEX5 extraction and is required for proper export from peroxisomes and recycling. When PEX5 recycling is compromised, polyubiquitinated at Lys-17 by PEX10 during its passage through the retrotranslocation channel, leading to its degradation.

It is found in the cytoplasm. It localises to the cytosol. Its subcellular location is the peroxisome matrix. Receptor that mediates peroxisomal import of proteins containing a C-terminal PTS1-type tripeptide peroxisomal targeting signal (SKL-type). Binds to cargo proteins containing a PTS1 peroxisomal targeting signal in the cytosol, and translocates them into the peroxisome matrix by passing through the PEX13-PEX14 docking complex along with cargo proteins. PEX5 receptor is then retrotranslocated into the cytosol, leading to release of bound cargo in the peroxisome matrix, and reset for a subsequent peroxisome import cycle. The sequence is that of Peroxisomal targeting signal receptor (PEX5) from Eremothecium gossypii (strain ATCC 10895 / CBS 109.51 / FGSC 9923 / NRRL Y-1056) (Yeast).